Here is a 474-residue protein sequence, read N- to C-terminus: Ribulose bisphosphate carboxylase large chain (474 aa).

Substrate contacts are provided by Asn-122 and Thr-172. Lys-174 acts as the Proton acceptor in catalysis. A substrate-binding site is contributed by Lys-176. Positions 200, 202, and 203 each coordinate Mg(2+). The residue at position 200 (Lys-200) is an N6-carboxylysine. His-293 serves as the catalytic Proton acceptor. Residues Arg-294, His-326, and Ser-378 each contribute to the substrate site.

It belongs to the RuBisCO large chain family. Type I subfamily. In terms of assembly, heterohexadecamer of 8 large chains and 8 small chains; disulfide-linked. The disulfide link is formed within the large subunit homodimers. The cofactor is Mg(2+). Post-translationally, the disulfide bond which can form in the large chain dimeric partners within the hexadecamer appears to be associated with oxidative stress and protein turnover.

It localises to the carboxysome. It carries out the reaction 2 (2R)-3-phosphoglycerate + 2 H(+) = D-ribulose 1,5-bisphosphate + CO2 + H2O. The enzyme catalyses D-ribulose 1,5-bisphosphate + O2 = 2-phosphoglycolate + (2R)-3-phosphoglycerate + 2 H(+). Its function is as follows. RuBisCO catalyzes two reactions: the carboxylation of D-ribulose 1,5-bisphosphate, the primary event in carbon dioxide fixation, as well as the oxidative fragmentation of the pentose substrate in the photorespiration process. Both reactions occur simultaneously and in competition at the same active site. The protein is Ribulose bisphosphate carboxylase large chain of Synechococcus sp. (strain JA-2-3B'a(2-13)) (Cyanobacteria bacterium Yellowstone B-Prime).